The sequence spans 368 residues: Phosphate acyltransferase (368 aa).

The protein belongs to the PlsX family. Homodimer. Probably interacts with PlsY.

Its subcellular location is the cytoplasm. It catalyses the reaction a fatty acyl-[ACP] + phosphate = an acyl phosphate + holo-[ACP]. It participates in lipid metabolism; phospholipid metabolism. In terms of biological role, catalyzes the reversible formation of acyl-phosphate (acyl-PO(4)) from acyl-[acyl-carrier-protein] (acyl-ACP). This enzyme utilizes acyl-ACP as fatty acyl donor, but not acyl-CoA. The chain is Phosphate acyltransferase from Methylibium petroleiphilum (strain ATCC BAA-1232 / LMG 22953 / PM1).